A 261-amino-acid polypeptide reads, in one-letter code: Flagellar L-ring protein (261 aa).

Residues 1-15 (MKRLLCLLLLTTLTG) form the signal peptide. A lipid anchor (N-palmitoyl cysteine) is attached at Cys16. Cys16 is lipidated: S-diacylglycerol cysteine. Residues 121–133 (KSADAELSKKNDS) are compositionally biased toward basic and acidic residues. The interval 121–140 (KSADAELSKKNDSSMDPLQV) is disordered.

It belongs to the FlgH family. In terms of assembly, the basal body constitutes a major portion of the flagellar organelle and consists of four rings (L,P,S, and M) mounted on a central rod.

The protein localises to the cell outer membrane. It is found in the bacterial flagellum basal body. Its function is as follows. Assembles around the rod to form the L-ring and probably protects the motor/basal body from shearing forces during rotation. The chain is Flagellar L-ring protein from Aliivibrio salmonicida (strain LFI1238) (Vibrio salmonicida (strain LFI1238)).